A 433-amino-acid polypeptide reads, in one-letter code: Ribosomal protein uS12 methylthiotransferase RimO (433 aa).

The region spanning 9–124 (NKINVITLGC…LLKALGADYR (116 aa)) is the MTTase N-terminal domain. [4Fe-4S] cluster-binding residues include C18, C53, C87, C148, C152, and C155. The region spanning 134-364 (TTPKNYAYLK…MDLQSQISWD (231 aa)) is the Radical SAM core domain. A TRAM domain is found at 367 to 433 (QEKLGQTFRC…TEFDLYGEPA (67 aa)).

The protein belongs to the methylthiotransferase family. RimO subfamily. Requires [4Fe-4S] cluster as cofactor.

It localises to the cytoplasm. The catalysed reaction is L-aspartate(89)-[ribosomal protein uS12]-hydrogen + (sulfur carrier)-SH + AH2 + 2 S-adenosyl-L-methionine = 3-methylsulfanyl-L-aspartate(89)-[ribosomal protein uS12]-hydrogen + (sulfur carrier)-H + 5'-deoxyadenosine + L-methionine + A + S-adenosyl-L-homocysteine + 2 H(+). Catalyzes the methylthiolation of an aspartic acid residue of ribosomal protein uS12. The chain is Ribosomal protein uS12 methylthiotransferase RimO from Flavobacterium psychrophilum (strain ATCC 49511 / DSM 21280 / CIP 103535 / JIP02/86).